Consider the following 138-residue polypeptide: Large ribosomal subunit protein uL16 (138 aa).

Residues 1-16 (MLIPKRVKFRRQHRPN) show a composition bias toward basic residues. Residues 1-25 (MLIPKRVKFRRQHRPNRSGMSKGGN) form a disordered region.

Belongs to the universal ribosomal protein uL16 family. In terms of assembly, part of the 50S ribosomal subunit.

Functionally, binds 23S rRNA and is also seen to make contacts with the A and possibly P site tRNAs. In Corynebacterium urealyticum (strain ATCC 43042 / DSM 7109), this protein is Large ribosomal subunit protein uL16.